The primary structure comprises 398 residues: Ras-related GTP-binding protein C (398 aa).

The interval Met1–Ala56 is disordered. At Ser2 the chain carries N-acetylserine. Residues Ser2 and Ser15 each carry the phosphoserine modification. Over residues Ala39–Gly55 the composition is skewed to gly residues. Residues Arg70, Ser71, Gly72, Lys73, Ser74, and Ser75 each coordinate GDP. Position 73 (Lys73) interacts with GTP. Positions 89 and 95 each coordinate GTP. A Phosphothreonine modification is found at Thr95. His177, Lys178, Asp180, and Ile219 together coordinate GDP. Asp180 contacts GTP.

The protein belongs to the GTR/RAG GTP-binding protein family. In terms of assembly, forms a heterodimer with RRAGA, in a sequence-independent manner, and RRAGB. Heterodimerization stabilizes proteins of the heterodimer. The GDP-bound form of RRAGC (in complex with the GTP-bound form of RRAGA or RRAGB), interacts with RPTOR, thereby promoting recruitment of mTORC1 to the lysosomes. Component of the lysosomal folliculin complex (LFC), composed of FLCN, FNIP1 (or FNIP2), RagA/RRAGA or RagB/RRAGB GDP-bound, RagC/RRAGC or RagD/RRAGD GTP-bound, and Ragulator. Interacts with NOL8. Interacts with SH3BP4; the interaction with this negative regulator is most probably direct, preferentially occurs with the inactive GDP-bound form of RRAGB, is negatively regulated by amino acids and prevents interaction with RPTOR. The Rag heterodimer interacts with SLC38A9; the probable amino acid sensor. Interacts with SESN1, SESN2 and SESN3. Interacts with PIP4P1. The GDP-bound form interacts with TFEB. The GDP-bound form interacts with TFE3. In terms of tissue distribution, expressed most abundantly in kidney. Moderately expressed in brain, ovary, and testis, and detected at lower levels in heart, liver, and muscle. Not detected in lung, spleen, and small intestine. Widely expressed in tumor cells, with expression being specifically up-regulated in highly metastatic cells.

The protein resides in the cytoplasm. Its subcellular location is the nucleus. It is found in the lysosome membrane. It catalyses the reaction GTP + H2O = GDP + phosphate + H(+). The activation of RagC/RRAGC is mediated by a GTPase activating protein (GAP). In high-amino acid conditions, activated by GTPase activating protein FLCN that stimulates RRAGC GTPase activity to turn it into its active GDP-bound form. In response to amino acid depletion, the GATOR1 complex inactivates RagC/RRAGC by securing the GTP-bound inactive form. Guanine nucleotide-binding protein that plays a crucial role in the cellular response to amino acid availability through regulation of the mTORC1 signaling cascade. Forms heterodimeric Rag complexes with RagA/RRAGA or RagB/RRAGB and cycles between an inactive GTP-bound and an active GDP-bound form: RagC/RRAGC is in its active form when GDP-bound RagC/RRAGC forms a complex with GTP-bound RagA/RRAGA (or RagB/RRAGB) and in an inactive form when GTP-bound RagC/RRAGC heterodimerizes with GDP-bound RagA/RRAGA (or RagB/RRAGB). In its GDP-bound active form, promotes the recruitment of mTORC1 to the lysosomes and its subsequent activation by the GTPase RHEB. This is a crucial step in the activation of the MTOR signaling cascade by amino acids. Also plays a central role in the non-canonical mTORC1 complex, which acts independently of RHEB and specifically mediates phosphorylation of MiT/TFE factors TFEB and TFE3: GDP-bound RagC/RRAGC mediates recruitment of MiT/TFE factors TFEB and TFE3. The polypeptide is Ras-related GTP-binding protein C (Mus musculus (Mouse)).